Consider the following 498-residue polypeptide: Glycerol kinase (498 aa).

An ADP-binding site is contributed by T11. Residues T11, S12, and S13 each contribute to the ATP site. T11 is a binding site for sn-glycerol 3-phosphate. Residue R15 coordinates ADP. R81, E82, Y133, and D242 together coordinate sn-glycerol 3-phosphate. Positions 81, 82, 133, 242, and 243 each coordinate glycerol. 2 residues coordinate ADP: T264 and G307. Positions 264, 307, 311, and 412 each coordinate ATP. G412 and N416 together coordinate ADP.

Belongs to the FGGY kinase family.

The catalysed reaction is glycerol + ATP = sn-glycerol 3-phosphate + ADP + H(+). It participates in polyol metabolism; glycerol degradation via glycerol kinase pathway; sn-glycerol 3-phosphate from glycerol: step 1/1. Its activity is regulated as follows. Inhibited by fructose 1,6-bisphosphate (FBP). Functionally, key enzyme in the regulation of glycerol uptake and metabolism. Catalyzes the phosphorylation of glycerol to yield sn-glycerol 3-phosphate. The polypeptide is Glycerol kinase (Delftia acidovorans (strain DSM 14801 / SPH-1)).